A 113-amino-acid polypeptide reads, in one-letter code: Chaperone protein SigE (113 aa).

Belongs to the IpgE/SigE chaperone family. In terms of assembly, homodimer or higher-order oligomers.

It is found in the cytoplasm. In terms of biological role, molecular chaperone required for SopB/SigD stabilization and secretion. This chain is Chaperone protein SigE (sigE), found in Salmonella paratyphi A (strain ATCC 9150 / SARB42).